The sequence spans 243 residues: Uridylate kinase (243 aa).

Residue 18–21 (KLGG) participates in ATP binding. Glycine 59 lines the UMP pocket. Residues glycine 60 and arginine 64 each contribute to the ATP site. Residues aspartate 79 and 140-147 (MGMPYFST) contribute to the UMP site. Residues tyrosine 173 and aspartate 176 each coordinate ATP.

It belongs to the UMP kinase family. In terms of assembly, homohexamer.

It localises to the cytoplasm. It catalyses the reaction UMP + ATP = UDP + ADP. It participates in pyrimidine metabolism; CTP biosynthesis via de novo pathway; UDP from UMP (UMPK route): step 1/1. Its activity is regulated as follows. Inhibited by UTP. Catalyzes the reversible phosphorylation of UMP to UDP. This Corynebacterium diphtheriae (strain ATCC 700971 / NCTC 13129 / Biotype gravis) protein is Uridylate kinase.